We begin with the raw amino-acid sequence, 374 residues long: Serpin B8 (374 aa).

This sequence belongs to the serpin family. Ov-serpin subfamily.

The protein localises to the cytoplasm. Has an important role in epithelial desmosome-mediated cell-cell adhesion. The protein is Serpin B8 (SERPINB8) of Bos taurus (Bovine).